Here is a 58-residue protein sequence, read N- to C-terminus: Keratin-associated protein 21-3 (58 aa).

Interacts with hair keratins.

Its function is as follows. In the hair cortex, hair keratin intermediate filaments are embedded in an interfilamentous matrix, consisting of hair keratin-associated proteins (KRTAP), which are essential for the formation of a rigid and resistant hair shaft through their extensive disulfide bond cross-linking with abundant cysteine residues of hair keratins. The matrix proteins include the high-sulfur and high-glycine-tyrosine keratins. This chain is Keratin-associated protein 21-3 (KRTAP21-3), found in Homo sapiens (Human).